A 132-amino-acid polypeptide reads, in one-letter code: Small ribosomal subunit protein uS8 (132 aa).

This sequence belongs to the universal ribosomal protein uS8 family. In terms of assembly, part of the 30S ribosomal subunit. Contacts proteins S5 and S12.

Functionally, one of the primary rRNA binding proteins, it binds directly to 16S rRNA central domain where it helps coordinate assembly of the platform of the 30S subunit. This Mycolicibacterium vanbaalenii (strain DSM 7251 / JCM 13017 / BCRC 16820 / KCTC 9966 / NRRL B-24157 / PYR-1) (Mycobacterium vanbaalenii) protein is Small ribosomal subunit protein uS8.